Reading from the N-terminus, the 305-residue chain is Carbamate kinase (305 aa).

This sequence belongs to the carbamate kinase family.

The protein localises to the cytoplasm. The catalysed reaction is hydrogencarbonate + NH4(+) + ATP = carbamoyl phosphate + ADP + H2O + H(+). The protein operates within metabolic intermediate metabolism; carbamoyl phosphate degradation; CO(2) and NH(3) from carbamoyl phosphate: step 1/1. This chain is Carbamate kinase (arcC), found in Thermoplasma acidophilum (strain ATCC 25905 / DSM 1728 / JCM 9062 / NBRC 15155 / AMRC-C165).